The primary structure comprises 519 residues: Laccase-2 (519 aa).

Residues 1-20 (MGLQRFSFFVTLALVARSLA) form the signal peptide. 2 Plastocyanin-like domains span residues 22-147 (IGPV…FVVY) and 159-301 (VDNE…ILRY). A glycan (N-linked (GlcNAc...) asparagine) is linked at N74. Cu cation contacts are provided by H84, H86, H129, and H131. 2 cysteine pairs are disulfide-bonded: C105/C508 and C137/C225. 6 N-linked (GlcNAc...) asparagine glycosylation sites follow: N161, N228, N237, N271, N353, and N361. One can recognise a Plastocyanin-like 3 domain in the interval 368–490 (TVPVLLQILS…AGFAIVFAED (123 aa)). Cu cation is bound by residues H415, H418, and H420. An N-linked (GlcNAc...) asparagine glycan is attached at N456. Residues H472, C473, H474, and H478 each contribute to the Cu cation site.

The protein belongs to the multicopper oxidase family. It depends on Cu cation as a cofactor.

It is found in the secreted. It catalyses the reaction 4 hydroquinone + O2 = 4 benzosemiquinone + 2 H2O. In terms of biological role, lignin degradation and detoxification of lignin-derived products. This Trametes versicolor (White-rot fungus) protein is Laccase-2 (LCC2).